The sequence spans 157 residues: Cell number regulator 10 (157 aa).

2 helical membrane passes run 41–57 (DCGL…ITFG) and 66–83 (GATS…LAYF).

The protein belongs to the cornifelin family. Expressed in roots, leaves, stalks, immature ears and silks.

Its subcellular location is the membrane. The chain is Cell number regulator 10 (CNR10) from Zea mays (Maize).